Here is a 334-residue protein sequence, read N- to C-terminus: Aspartate carbamoyltransferase catalytic subunit (334 aa).

The carbamoyl phosphate site is built by R71 and T72. K99 serves as a coordination point for L-aspartate. R121, H151, and Q154 together coordinate carbamoyl phosphate. 2 residues coordinate L-aspartate: R184 and R239. G280 and P281 together coordinate carbamoyl phosphate.

This sequence belongs to the aspartate/ornithine carbamoyltransferase superfamily. ATCase family. In terms of assembly, heterododecamer (2C3:3R2) of six catalytic PyrB chains organized as two trimers (C3), and six regulatory PyrI chains organized as three dimers (R2).

The enzyme catalyses carbamoyl phosphate + L-aspartate = N-carbamoyl-L-aspartate + phosphate + H(+). It participates in pyrimidine metabolism; UMP biosynthesis via de novo pathway; (S)-dihydroorotate from bicarbonate: step 2/3. Functionally, catalyzes the condensation of carbamoyl phosphate and aspartate to form carbamoyl aspartate and inorganic phosphate, the committed step in the de novo pyrimidine nucleotide biosynthesis pathway. The protein is Aspartate carbamoyltransferase catalytic subunit of Pseudomonas syringae pv. tomato (strain ATCC BAA-871 / DC3000).